Here is a 324-residue protein sequence, read N- to C-terminus: Glyoxylate/hydroxypyruvate reductase B (324 aa).

Catalysis depends on residues Arg237 and Glu266. The active-site Proton donor is the His285.

The protein belongs to the D-isomer specific 2-hydroxyacid dehydrogenase family. GhrB subfamily. As to quaternary structure, homodimer.

Its subcellular location is the cytoplasm. The catalysed reaction is glycolate + NADP(+) = glyoxylate + NADPH + H(+). The enzyme catalyses (R)-glycerate + NAD(+) = 3-hydroxypyruvate + NADH + H(+). It carries out the reaction (R)-glycerate + NADP(+) = 3-hydroxypyruvate + NADPH + H(+). In terms of biological role, catalyzes the NADPH-dependent reduction of glyoxylate and hydroxypyruvate into glycolate and glycerate, respectively. This Shigella flexneri protein is Glyoxylate/hydroxypyruvate reductase B.